A 142-amino-acid chain; its full sequence is Protein spalt-accessory (142 aa).

A signal peptide spans 1–16 (MKLLIALFVLVNAVIA). The span at 65 to 77 (GQGGVSPGQGGFA) shows a compositional bias: gly residues. The segment at 65–142 (GQGGVSPGQG…HHEHHGHHRH (78 aa)) is disordered. The span at 112-124 (NHHEYPEHHGDHH) shows a compositional bias: basic and acidic residues. The segment covering 125 to 142 (REHHEHHGHHEHHGHHRH) has biased composition (basic residues).

The protein localises to the secreted. Likely to be involved in the establishment of the head. The protein is Protein spalt-accessory (sala) of Drosophila orena (Fruit fly).